The sequence spans 452 residues: Ribosomal protein uS12 methylthiotransferase RimO (452 aa).

The 116-residue stretch at 3–118 folds into the MTTase N-terminal domain; that stretch reads GKIGFVSLGC…VMQAIHLHLP (116 aa). Cysteine 12, cysteine 48, cysteine 77, cysteine 149, cysteine 153, and cysteine 156 together coordinate [4Fe-4S] cluster. A Radical SAM core domain is found at 135 to 381; that stretch reads LTPKHYAYLK…MAKAEDISIK (247 aa). Positions 384-452 constitute a TRAM domain; sequence AKKIGKRVQV…SQGHDLIAET (69 aa).

This sequence belongs to the methylthiotransferase family. RimO subfamily. Requires [4Fe-4S] cluster as cofactor.

It localises to the cytoplasm. The catalysed reaction is L-aspartate(89)-[ribosomal protein uS12]-hydrogen + (sulfur carrier)-SH + AH2 + 2 S-adenosyl-L-methionine = 3-methylsulfanyl-L-aspartate(89)-[ribosomal protein uS12]-hydrogen + (sulfur carrier)-H + 5'-deoxyadenosine + L-methionine + A + S-adenosyl-L-homocysteine + 2 H(+). Its function is as follows. Catalyzes the methylthiolation of an aspartic acid residue of ribosomal protein uS12. In Polynucleobacter asymbioticus (strain DSM 18221 / CIP 109841 / QLW-P1DMWA-1) (Polynucleobacter necessarius subsp. asymbioticus), this protein is Ribosomal protein uS12 methylthiotransferase RimO.